An 843-amino-acid chain; its full sequence is Protein P (843 aa).

Residues M1–Q177 form a terminal protein domain (TP) region. The tract at residues E178–L346 is spacer. 2 disordered regions span residues Q180–S221 and R282–R313. Residues S196–S221 show a composition bias toward polar residues. Residues E347–Q690 are polymerase/reverse transcriptase domain (RT). The Reverse transcriptase domain maps to Q357–I600. Mg(2+) is bound by residues D429, D551, and D552.

The protein belongs to the hepadnaviridae P protein family.

It carries out the reaction DNA(n) + a 2'-deoxyribonucleoside 5'-triphosphate = DNA(n+1) + diphosphate. The catalysed reaction is Endonucleolytic cleavage to 5'-phosphomonoester.. Its activity is regulated as follows. Activated by host HSP70 and HSP40 in vitro to be able to bind the epsilon loop of the pgRNA. Because deletion of the RNase H region renders the protein partly chaperone-independent, the chaperones may be needed indirectly to relieve occlusion of the RNA-binding site by this domain. Inhibited by several reverse-transcriptase inhibitors: Lamivudine, Adefovir and Entecavir. In terms of biological role, multifunctional enzyme that converts the viral RNA genome into dsDNA in viral cytoplasmic capsids. This enzyme displays a DNA polymerase activity that can copy either DNA or RNA templates, and a ribonuclease H (RNase H) activity that cleaves the RNA strand of RNA-DNA heteroduplexes in a partially processive 3'- to 5'-endonucleasic mode. Neo-synthesized pregenomic RNA (pgRNA) are encapsidated together with the P protein, and reverse-transcribed inside the nucleocapsid. Initiation of reverse-transcription occurs first by binding the epsilon loop on the pgRNA genome, and is initiated by protein priming, thereby the 5'-end of (-)DNA is covalently linked to P protein. Partial (+)DNA is synthesized from the (-)DNA template and generates the relaxed circular DNA (RC-DNA) genome. After budding and infection, the RC-DNA migrates in the nucleus, and is converted into a plasmid-like covalently closed circular DNA (cccDNA). The activity of P protein does not seem to be necessary for cccDNA generation, and is presumably released from (+)DNA by host nuclear DNA repair machinery. In Homo sapiens (Human), this protein is Protein P.